A 684-amino-acid chain; its full sequence is Methionine--tRNA ligase (684 aa).

A 'HIGH' region motif is present at residues 15–25; sequence PYANGAIHLGH. Residues Cys146, Cys149, Cys159, and Cys162 each coordinate Zn(2+). The 'KMSKS' region signature appears at 331-335; that stretch reads KMSKS. Residue Lys334 coordinates ATP. Positions 582–684 constitute a tRNA-binding domain; sequence DFAKLDLRVA…SGVTAGMQVR (103 aa).

The protein belongs to the class-I aminoacyl-tRNA synthetase family. MetG type 1 subfamily. As to quaternary structure, homodimer. It depends on Zn(2+) as a cofactor.

It localises to the cytoplasm. It carries out the reaction tRNA(Met) + L-methionine + ATP = L-methionyl-tRNA(Met) + AMP + diphosphate. In terms of biological role, is required not only for elongation of protein synthesis but also for the initiation of all mRNA translation through initiator tRNA(fMet) aminoacylation. This chain is Methionine--tRNA ligase, found in Glaesserella parasuis serovar 5 (strain SH0165) (Haemophilus parasuis).